The following is a 409-amino-acid chain: MATSVGHRCLGLLHGVAPWRSSLHPCEITALSQSLQPLRKLPFRAFRTDARKIHTAPARTMFLLRPLPILLVTGGGYAGYRQYEKYRERELEKLGLEIPPKLAGHWEVALYKSVPTRLLSRAWGRLNQVELPHWLRRPVYSLYIWTFGVNMKEAAVEDLHHYRNLSEFFRRKLKPQARPVCGLHSVISPSDGRILNFGQVKNCEVEQVKGVTYSLESFLGPRMCTEDLPFPPAASCDSFKNQLVTREGNELYHCVIYLAPGDYHCFHSPTDWTVSHRRHFPGSLMSVNPGMARWIKELFCHNERVVLTGDWKHGFFSLTAVGATNVGSIRIYFDRDLHTNSPRHSKGSYNDFSFVTHTNREGVPMRKGEHLGEFNLGSTIVLIFEAPKDFNFQLKTGQKIRFGEALGSL.

A mitochondrion-targeting transit peptide spans 1 to 52 (MATSVGHRCLGLLHGVAPWRSSLHPCEITALSQSLQPLRKLPFRAFRTDARK). Residues 36–103 (QPLRKLPFRA…LGLEIPPKLA (68 aa)) are necessary for localization to both lipid droplets and mitochondria. Over 53 to 63 (IHTAPARTMFL) the chain is Mitochondrial matrix. The chain crosses the membrane as a helical span at residues 64 to 82 (LRPLPILLVTGGGYAGYRQ). Residues 83–409 (YEKYRERELE…IRFGEALGSL (327 aa)) lie on the Mitochondrial intermembrane side of the membrane. Catalysis depends on charge relay system; for autoendoproteolytic cleavage activity residues aspartate 191, histidine 267, and serine 378. The active-site Schiff-base intermediate with substrate; via pyruvic acid; for decarboxylase activity is serine 378. Serine 378 is subject to Pyruvic acid (Ser); by autocatalysis.

The protein belongs to the phosphatidylserine decarboxylase family. PSD-B subfamily. Eukaryotic type I sub-subfamily. As to quaternary structure, heterodimer of a large membrane-associated beta subunit and a small pyruvoyl-containing alpha subunit. It depends on pyruvate as a cofactor. In terms of processing, is synthesized initially as an inactive proenzyme. Formation of the active enzyme involves a self-maturation process in which the active site pyruvoyl group is generated from an internal serine residue via an autocatalytic post-translational modification. Two non-identical subunits are generated from the proenzyme in this reaction, and the pyruvate is formed at the N-terminus of the alpha chain, which is derived from the carboxyl end of the proenzyme. The autoendoproteolytic cleavage occurs by a canonical serine protease mechanism, in which the side chain hydroxyl group of the serine supplies its oxygen atom to form the C-terminus of the beta chain, while the remainder of the serine residue undergoes an oxidative deamination to produce ammonia and the pyruvoyl prosthetic group on the alpha chain. During this reaction, the Ser that is part of the protease active site of the proenzyme becomes the pyruvoyl prosthetic group, which constitutes an essential element of the active site of the mature decarboxylase.

It localises to the mitochondrion inner membrane. The protein localises to the cytoplasm. The protein resides in the lipid droplet. The enzyme catalyses a 1,2-diacyl-sn-glycero-3-phospho-L-serine + H(+) = a 1,2-diacyl-sn-glycero-3-phosphoethanolamine + CO2. It participates in phospholipid metabolism; phosphatidylethanolamine biosynthesis. In terms of biological role, catalyzes the formation of phosphatidylethanolamine (PtdEtn) from phosphatidylserine (PtdSer). Plays a central role in phospholipid metabolism and in the interorganelle trafficking of phosphatidylserine. May be involved in lipid droplet biogenesis at the endoplasmic reticulum membrane. This Homo sapiens (Human) protein is Phosphatidylserine decarboxylase proenzyme, mitochondrial.